Here is a 138-residue protein sequence, read N- to C-terminus: Large ribosomal subunit protein uL16 (138 aa).

Over residues 1–17 (MLIPRKVKHRKQHHPKQ) the composition is skewed to basic residues. The tract at residues 1–24 (MLIPRKVKHRKQHHPKQRGIASGG) is disordered.

Belongs to the universal ribosomal protein uL16 family. As to quaternary structure, part of the 50S ribosomal subunit.

Its function is as follows. Binds 23S rRNA and is also seen to make contacts with the A and possibly P site tRNAs. The protein is Large ribosomal subunit protein uL16 of Mycolicibacterium vanbaalenii (strain DSM 7251 / JCM 13017 / BCRC 16820 / KCTC 9966 / NRRL B-24157 / PYR-1) (Mycobacterium vanbaalenii).